The sequence spans 601 residues: Potassium voltage-gated channel subfamily A member 5 (601 aa).

The interval M1–E200 is tetramerization domain. At M1 to G236 the chain is on the cytoplasmic side. The segment at G19–L93 is disordered. The span at R65–P74 shows a compositional bias: pro residues. K210 participates in a covalent cross-link: Glycyl lysine isopeptide (Lys-Gly) (interchain with G-Cter in SUMO). Residues S237–L258 traverse the membrane as a helical segment. The Extracellular segment spans residues E259–P312. Residues P275–S297 are disordered. N288 carries an N-linked (GlcNAc...) asparagine glycan. Residues F313–A334 traverse the membrane as a helical segment. C335 carries S-palmitoyl cysteine lipidation. The Cytoplasmic segment spans residues C335–I345. Residues M346–A366 form a helical membrane-spanning segment. Over E367 to S383 the chain is Extracellular. Residues L384 to H404 form a helical; Voltage-sensor membrane-spanning segment. Topologically, residues S405–M419 are cytoplasmic. The interval K406–M419 is S4-S5 linker. Residues R420–Y441 form a helical membrane-spanning segment. Topologically, residues F442–I455 are extracellular. Positions P456–T467 form an intramembrane region, helical. Positions T468–D473 match the Selectivity filter motif. The stretch at T468 to R475 is an intramembrane region. At P476–K482 the chain is on the extracellular side. Residues I483 to Y511 traverse the membrane as a helical segment. Residues H512 to L601 lie on the Cytoplasmic side of the membrane. Positions A521–S545 are disordered. Residue K524 forms a Glycyl lysine isopeptide (Lys-Gly) (interchain with G-Cter in SUMO) linkage. The short motif at T599–L601 is the PDZ-binding element.

The protein belongs to the potassium channel family. A (Shaker) (TC 1.A.1.2) subfamily. Kv1.5/KCNA5 sub-subfamily. Homotetramer and heterotetramer of potassium channel proteins. Interacts with DLG1, which enhances channel currents. Forms a ternary complex with DLG1 and CAV3. Interacts with KCNAB1. Interacts with UBE2I. Interacts with XIRP2; the interaction is required for normal action potential configuration in the heart. In terms of processing, glycosylated. Sumoylated on Lys-210, and Lys-524, preferentially with SUMO3. Sumoylation regulates the voltage sensitivity of the channel.

The protein resides in the cell membrane. It carries out the reaction K(+)(in) = K(+)(out). Voltage-gated potassium channel that mediates transmembrane potassium transport in excitable membranes. Forms tetrameric potassium-selective channels through which potassium ions pass in accordance with their electrochemical gradient. The channel alternates between opened and closed conformations in response to the voltage difference across the membrane. Can form functional homotetrameric channels and heterotetrameric channels that contain variable proportions of KCNA1, KCNA2, KCNA4, KCNA5, and possibly other family members as well; channel properties depend on the type of alpha subunits that are part of the channel. Channel properties are modulated by cytoplasmic beta subunits that regulate the subcellular location of the alpha subunits and promote rapid inactivation. Homotetrameric channels display rapid activation and slow inactivation. Required for normal electrical conduction including formation of the infranodal ventricular conduction system and normal action potential configuration, as a result of its interaction with XIRP2. May play a role in regulating the secretion of insulin in normal pancreatic islets. The sequence is that of Potassium voltage-gated channel subfamily A member 5 (KCNA5) from Mustela putorius furo (European domestic ferret).